Consider the following 386-residue polypeptide: MEEPGARCAPPPPAGSQTQTPSSNLSHNCSADSYIYQDSIALPWKVLLVALLALITLATTLSNAFVIATVYRTRKLHTPANYLIASLAVTDLLVSILVMPISTMYTVTGRWTLGQVVCDFWLSSDITCCTASIMHLCVIALDRYWAITDAVEYSAKRTPRRAAVMIALVWVFSISISLPRFFWRQAKAEEEVLDCLVNTDHVLYTVYSTVGAFYLPTLLLIALYGRIYVEARSRILKQTPNKTGKRLSRAQLISDSPGSTSSVTSINSRVPDVPSESGSPVYVNQVKVRVSDALLEKKKLMAARERKATKTLGIILGAFIVCWLPFFIISLVMPICKDACWFHMAIFDFFNWLGYLNSLINPIIYTMPNEDFKQAFHKLIRFKCTG.

Residues 1-25 (MEEPGARCAPPPPAGSQTQTPSSNL) are disordered. Residues 1 to 42 (MEEPGARCAPPPPAGSQTQTPSSNLSHNCSADSYIYQDSIAL) lie on the Extracellular side of the membrane. Residues 16–25 (SQTQTPSSNL) are compositionally biased toward polar residues. N-linked (GlcNAc...) asparagine glycosylation is found at N24 and N28. The helical transmembrane segment at 43–68 (PWKVLLVALLALITLATTLSNAFVIA) threads the bilayer. The Cytoplasmic segment spans residues 69-82 (TVYRTRKLHTPANY). A helical transmembrane segment spans residues 83–107 (LIASLAVTDLLVSILVMPISTMYTV). The Extracellular portion of the chain corresponds to 108–115 (TGRWTLGQ). Residues 116–141 (VVCDFWLSSDITCCTASIMHLCVIAL) traverse the membrane as a helical segment. An intrachain disulfide couples C118 to C195. The ergotamine site is built by D125 and T130. Positions 142–144 (DRY) match the DRY motif; important for ligand-induced conformation changes and signaling motif. Residues 142 to 161 (DRYWAITDAVEYSAKRTPRR) are Cytoplasmic-facing. A helical transmembrane segment spans residues 162–180 (AAVMIALVWVFSISISLPR). The Extracellular portion of the chain corresponds to 181–201 (FFWRQAKAEEEVLDCLVNTDH). Position 197 (V197) interacts with ergotamine. The chain crosses the membrane as a helical span at residues 202 to 225 (VLYTVYSTVGAFYLPTLLLIALYG). Over 226-311 (RIYVEARSRI…AARERKATKT (86 aa)) the chain is Cytoplasmic. A disordered region spans residues 253-272 (ISDSPGSTSSVTSINSRVPD). Low complexity predominate over residues 254 to 268 (SDSPGSTSSVTSINS). The chain crosses the membrane as a helical span at residues 312–333 (LGIILGAFIVCWLPFFIISLVM). At 334–343 (PICKDACWFH) the chain is on the extracellular side. A helical transmembrane segment spans residues 344 to 366 (MAIFDFFNWLGYLNSLINPIIYT). The NPxxY motif; important for ligand-induced conformation changes and signaling motif lies at 361–365 (NPIIY). Residues 367–386 (MPNEDFKQAFHKLIRFKCTG) are Cytoplasmic-facing. C384 carries S-palmitoyl cysteine lipidation.

Belongs to the G-protein coupled receptor 1 family. Homodimer. Heterodimer with HTR1D. Post-translationally, phosphorylated. Desensitization of the receptor may be mediated by its phosphorylation. In terms of processing, palmitoylated.

The protein resides in the cell membrane. G-protein coupled receptor for 5-hydroxytryptamine (serotonin). Also functions as a receptor for ergot alkaloid derivatives, various anxiolytic and antidepressant drugs and other psychoactive substances, such as lysergic acid diethylamide (LSD). Ligand binding causes a conformation change that triggers signaling via guanine nucleotide-binding proteins (G proteins) and modulates the activity of downstream effectors, such as adenylate cyclase. HTR1B is coupled to G(i)/G(o) G alpha proteins and mediates inhibitory neurotransmission by inhibiting adenylate cyclase activity. Arrestin family members inhibit signaling via G proteins and mediate activation of alternative signaling pathways. Regulates the release of 5-hydroxytryptamine, dopamine and acetylcholine in the brain, and thereby affects neural activity, nociceptive processing, pain perception, mood and behavior. Besides, plays a role in vasoconstriction of cerebral arteries. This is 5-hydroxytryptamine receptor 1B (HTR1B) from Spalax ehrenbergi (Middle East blind mole rat).